Consider the following 158-residue polypeptide: Transcription elongation factor GreA (158 aa).

Belongs to the GreA/GreB family.

Its function is as follows. Necessary for efficient RNA polymerase transcription elongation past template-encoded arresting sites. The arresting sites in DNA have the property of trapping a certain fraction of elongating RNA polymerases that pass through, resulting in locked ternary complexes. Cleavage of the nascent transcript by cleavage factors such as GreA or GreB allows the resumption of elongation from the new 3'terminus. GreA releases sequences of 2 to 3 nucleotides. The polypeptide is Transcription elongation factor GreA (Psychrobacter arcticus (strain DSM 17307 / VKM B-2377 / 273-4)).